The following is a 334-amino-acid chain: Formamidase (334 aa).

The region spanning 14 to 260 (FLVAAIQFPV…WEIVTGEIYP (247 aa)) is the CN hydrolase domain. Catalysis depends on E60, which acts as the Proton acceptor. K133 serves as the catalytic Proton donor. The Nucleophile role is filled by C166.

It belongs to the carbon-nitrogen hydrolase superfamily. Aliphatic amidase family.

It carries out the reaction formamide + H2O = formate + NH4(+). Its function is as follows. Is an aliphatic amidase with a restricted substrate specificity, as it only hydrolyzes formamide. This is Formamidase from Helicobacter pylori (strain HPAG1).